A 398-amino-acid chain; its full sequence is Succinate--CoA ligase [ADP-forming] subunit beta (398 aa).

One can recognise an ATP-grasp domain in the interval lysine 9–glutamate 254. Residues lysine 46, glycine 53–glycine 55, glutamate 109, serine 112, and glutamate 117 contribute to the ATP site. Asparagine 209 and aspartate 223 together coordinate Mg(2+). Residues asparagine 274 and glycine 331–methionine 333 each bind substrate.

It belongs to the succinate/malate CoA ligase beta subunit family. As to quaternary structure, heterotetramer of two alpha and two beta subunits. Mg(2+) serves as cofactor.

It carries out the reaction succinate + ATP + CoA = succinyl-CoA + ADP + phosphate. The catalysed reaction is GTP + succinate + CoA = succinyl-CoA + GDP + phosphate. Its pathway is carbohydrate metabolism; tricarboxylic acid cycle; succinate from succinyl-CoA (ligase route): step 1/1. Functionally, succinyl-CoA synthetase functions in the citric acid cycle (TCA), coupling the hydrolysis of succinyl-CoA to the synthesis of either ATP or GTP and thus represents the only step of substrate-level phosphorylation in the TCA. The beta subunit provides nucleotide specificity of the enzyme and binds the substrate succinate, while the binding sites for coenzyme A and phosphate are found in the alpha subunit. This is Succinate--CoA ligase [ADP-forming] subunit beta from Rhodopseudomonas palustris (strain ATCC BAA-98 / CGA009).